The primary structure comprises 802 residues: ATP-dependent zinc metalloprotease FTSH 3, mitochondrial (802 aa).

The N-terminal 21 residues, 1-21 (MSLSSLSRALARSARSSRQRQ), are a transit peptide targeting the mitochondrion. Residues 1–23 (MSLSSLSRALARSARSSRQRQGS) show a composition bias toward low complexity. Disordered stretches follow at residues 1 to 33 (MSLS…GLRA) and 85 to 120 (DKSK…SGDQ). The span at 85 to 113 (DKSKKNHGKHSEEENKGKGDESDKSDSKK) shows a compositional bias: basic and acidic residues. The helical transmembrane segment at 133 to 153 (MIAPLFLFGLLLLSASASSSE) threads the bilayer. Residue 360–367 (GPPGTGKT) participates in ATP binding. Residue H585 participates in Zn(2+) binding. E586 is an active-site residue. The Zn(2+) site is built by H589 and D661. Residues 773–802 (KQGFQDEDSNRNAELSNADGASSLGEAVAS) form a disordered region.

It in the N-terminal section; belongs to the AAA ATPase family. The protein in the C-terminal section; belongs to the peptidase M41 family. It depends on Zn(2+) as a cofactor.

It localises to the mitochondrion inner membrane. Functionally, probable ATP-dependent zinc metallopeptidase. The polypeptide is ATP-dependent zinc metalloprotease FTSH 3, mitochondrial (FTSH3) (Oryza sativa subsp. japonica (Rice)).